Reading from the N-terminus, the 480-residue chain is Probable glycosyltransferase 2 (480 aa).

The span at 1–21 (MGQEGMGYNNGKGGGGGGGGL) shows a compositional bias: gly residues. A disordered region spans residues 1–45 (MGQEGMGYNNGKGGGGGGGGLPMTAPRPRGASPLSSHGHHHRSRK). The Cytoplasmic portion of the chain corresponds to 1-49 (MGQEGMGYNNGKGGGGGGGGLPMTAPRPRGASPLSSHGHHHRSRKIHRT). A helical; Signal-anchor for type II membrane protein transmembrane segment spans residues 50–72 (FNNVKITVLCGLVTILVLRGTIG). Residues 73–480 (LNLSLPNQPT…DVKAKISTTS (408 aa)) are Lumenal-facing. 4 N-linked (GlcNAc...) asparagine glycosylation sites follow: Asn-74, Asn-124, Asn-129, and Asn-458.

The protein belongs to the glycosyltransferase 34 family.

It is found in the golgi apparatus membrane. Probable glycosyltransferase that may be involved in the biosynthesis of xyloglucan. The sequence is that of Probable glycosyltransferase 2 from Oryza sativa subsp. indica (Rice).